We begin with the raw amino-acid sequence, 408 residues long: 3-phosphoshikimate 1-carboxyvinyltransferase (408 aa).

3 residues coordinate 3-phosphoshikimate: Lys20, Ser21, and Arg25. Lys20 serves as a coordination point for phosphoenolpyruvate. Arg111 lines the phosphoenolpyruvate pocket. Positions 151, 152, 153, 178, 293, and 320 each coordinate 3-phosphoshikimate. Gln153 contacts phosphoenolpyruvate. Catalysis depends on Asp293, which acts as the Proton acceptor. Residues Arg324, Arg365, and Lys389 each contribute to the phosphoenolpyruvate site.

Belongs to the EPSP synthase family. As to quaternary structure, monomer.

Its subcellular location is the cytoplasm. The catalysed reaction is 3-phosphoshikimate + phosphoenolpyruvate = 5-O-(1-carboxyvinyl)-3-phosphoshikimate + phosphate. It functions in the pathway metabolic intermediate biosynthesis; chorismate biosynthesis. Functionally, catalyzes the transfer of the enolpyruvyl moiety of phosphoenolpyruvate (PEP) to the 5-hydroxyl of shikimate-3-phosphate (S3P) to produce enolpyruvyl shikimate-3-phosphate and inorganic phosphate. The protein is 3-phosphoshikimate 1-carboxyvinyltransferase of Sulfurisphaera tokodaii (strain DSM 16993 / JCM 10545 / NBRC 100140 / 7) (Sulfolobus tokodaii).